Reading from the N-terminus, the 530-residue chain is MSAFAQPPGAGRKAVDVAIVGSGPTGMALAALLGCQGRSVVVLERYTGLYNLPRAAAFDDETMRTFQKLGVAEKMLPGTNVQRGYVWVNGDDEVLLDIEFDNPGRCGWPAQYMMYQPHLESVLDELITSLPTVEIRRGMTVESVDQQDGDDVLVRATDVEGSAYLVRARYVVGCDGGNGVVRQFAGGELDDYGFFENWLVCDFQLNRDVPDLPTFRQVCDPAEPIAIVNIGPRFHRFSFRLESAANREEVVHPDKVWPRVATYLTPEDAELVRVANYTFRSCITTQWRHRRILLAGDAAHQMPPFLAQGMVSGIRDARNLAWKLDMVLAGHPDSLLDTYQAEREPHVRYITEKAIELGRVQTMRDTALAAQRDAQMIAARKANQKPDKLRYPALSGGLIANHGDMFPQGLVSTSSTTALFDEIAGTGWLVVADGPQVLSGIAEGDRTAFTEIGGKEVIFGLTSMFDGAPVSDTAGVYTRWFAAHECVAAIVRPDGYVFGLARDAAELAGLAKELVAAVAPVPSRPPAPTA.

It catalyses the reaction resorcinol + NADH + O2 + H(+) = benzene-1,2,4-triol + NAD(+) + H2O. Functionally, single-component hydroxylase that is part of the gamma-resorcylate (GRA) degradation pathway. GRA is initially converted by GRA decarboxylase to resorcinol, which is hydroxylated by resorcinol 4-hydroxylase. The polypeptide is Probable NADH-specific resorcinol 4-hydroxylase (tsdB) (Rhodococcus jostii (strain RHA1)).